Consider the following 252-residue polypeptide: 2-succinyl-6-hydroxy-2,4-cyclohexadiene-1-carboxylate synthase (252 aa).

The protein belongs to the AB hydrolase superfamily. MenH family. Monomer.

The catalysed reaction is 5-enolpyruvoyl-6-hydroxy-2-succinyl-cyclohex-3-ene-1-carboxylate = (1R,6R)-6-hydroxy-2-succinyl-cyclohexa-2,4-diene-1-carboxylate + pyruvate. It functions in the pathway quinol/quinone metabolism; 1,4-dihydroxy-2-naphthoate biosynthesis; 1,4-dihydroxy-2-naphthoate from chorismate: step 3/7. It participates in quinol/quinone metabolism; menaquinone biosynthesis. Functionally, catalyzes a proton abstraction reaction that results in 2,5-elimination of pyruvate from 2-succinyl-5-enolpyruvyl-6-hydroxy-3-cyclohexene-1-carboxylate (SEPHCHC) and the formation of 2-succinyl-6-hydroxy-2,4-cyclohexadiene-1-carboxylate (SHCHC). This is 2-succinyl-6-hydroxy-2,4-cyclohexadiene-1-carboxylate synthase from Klebsiella pneumoniae (strain 342).